The chain runs to 100 residues: Urease subunit gamma (100 aa).

This sequence belongs to the urease gamma subunit family. In terms of assembly, heterotrimer of UreA (gamma), UreB (beta) and UreC (alpha) subunits. Three heterotrimers associate to form the active enzyme.

It is found in the cytoplasm. It carries out the reaction urea + 2 H2O + H(+) = hydrogencarbonate + 2 NH4(+). It functions in the pathway nitrogen metabolism; urea degradation; CO(2) and NH(3) from urea (urease route): step 1/1. The polypeptide is Urease subunit gamma (Paraburkholderia xenovorans (strain LB400)).